The chain runs to 274 residues: Large ribosomal subunit protein uL2 (274 aa).

The interval 214-274 (LGRRPRTRPV…NKYIVERRKK (61 aa)) is disordered.

Belongs to the universal ribosomal protein uL2 family. Part of the 50S ribosomal subunit. Forms a bridge to the 30S subunit in the 70S ribosome.

In terms of biological role, one of the primary rRNA binding proteins. Required for association of the 30S and 50S subunits to form the 70S ribosome, for tRNA binding and peptide bond formation. It has been suggested to have peptidyltransferase activity; this is somewhat controversial. Makes several contacts with the 16S rRNA in the 70S ribosome. The sequence is that of Large ribosomal subunit protein uL2 from Flavobacterium johnsoniae (strain ATCC 17061 / DSM 2064 / JCM 8514 / BCRC 14874 / CCUG 350202 / NBRC 14942 / NCIMB 11054 / UW101) (Cytophaga johnsonae).